The following is a 444-amino-acid chain: MKNIEKSEIIISLVDVDKEFGDKKVLDQINLDIKRGDFVTLLGPSGSGKTTILRLIGGFEWTTRGEIKFNGIDIKDVPAHKRDTATIFQDYALFPHLSVRGNIEFGLKLKRIKKKAEEIPDVVWKKFEHLKKKWQDKQKRKIKELKILQAHLEKLLENPQLDIKKRKKLQDKLDDSDFRYSNWENYLTSKSESFKKKYLTRRITKQEINKEITDIIDLVGLTGNENRAISELSGGMKQRVALARSLVIEPEIVLLDEPLSALDTKIRQKMQVFLKKIQQKLGLTFIFVTHDQDEALQLSDKIAIIRNGKIAQYDEPKQIYDYPVNKWVANFIGDSNFFQAKYIKKNQVEILGLKLYTIHDEFIPGQKLDCLIRPEDIDIDLNSGYFKGKVIQNIYKGSYYSLDIKVENTIINVETNDFYDLETQVFIKWDDDAIHLMEMENAEI.

The region spanning 11 to 332 is the ABC transporter domain; that stretch reads ISLVDVDKEF…PVNKWVANFI (322 aa). 43–50 contributes to the ATP binding site; the sequence is GPSGSGKT. The segment at 111 to 201 is insert; it reads RIKKKAEEIP…ESFKKKYLTR (91 aa).

It belongs to the ABC transporter superfamily. Spermidine/putrescine importer (TC 3.A.1.11.1) family. As to quaternary structure, the complex is composed of two ATP-binding proteins (PotA), two transmembrane proteins (PotB and PotC) and a solute-binding protein (PotD).

It localises to the cell membrane. It carries out the reaction ATP + H2O + polyamine-[polyamine-binding protein]Side 1 = ADP + phosphate + polyamineSide 2 + [polyamine-binding protein]Side 1.. Functionally, part of the ABC transporter complex PotABCD involved in spermidine/putrescine import. Responsible for energy coupling to the transport system. The polypeptide is Spermidine/putrescine import ATP-binding protein PotA (Mesomycoplasma hyopneumoniae (strain 232) (Mycoplasma hyopneumoniae)).